A 321-amino-acid polypeptide reads, in one-letter code: Transcription factor ATOH8 (321 aa).

2 disordered regions span residues 59 to 193 (GLRD…SSYS) and 203 to 222 (HQDS…AASS). Over residues 70–85 (VPVPVPVPVPVAPAVP) the composition is skewed to pro residues. Residues 93 to 109 (AGERGGSRAPEVSDARK) show a composition bias toward basic and acidic residues. Residues 121-132 (LPTPPPPPPPAP) are compositionally biased toward pro residues. Residues 133 to 143 (QSQAPGGPEAQ) show a composition bias toward low complexity. The span at 160 to 186 (PARPAPSAPPAPPAPPESTVRPAPPTR) shows a compositional bias: pro residues. The segment at 230–243 (TRRLLANARERTRV) is basic motif; degenerate. In terms of domain architecture, bHLH spans 230 to 282 (TRRLLANARERTRVHTISAAFEALRKQVPCYSYGQKLSKLAILRIACNYILSL). Residues 244–282 (HTISAAFEALRKQVPCYSYGQKLSKLAILRIACNYILSL) form a helix-loop-helix motif region.

Efficient DNA binding requires dimerization with another bHLH protein. Interacts with NEUROG3 and NEUROD1. Interacts with ZFPM2; mediates indirect interaction with GATA4. Forms a heterodimer with TCF3; repress transcription of TCF3 and TCF3/NEUROG3 dimer-induced transactivation of E box-dependent promoters. Expressed in lung, liver, kidney, heart and pancreas. Expressed in endothel of umbilical vessels.

Its subcellular location is the nucleus. The protein resides in the nucleus speckle. It localises to the cytoplasm. Its function is as follows. Transcription factor that binds a palindromic (canonical) core consensus DNA sequence 5'-CANNTG- 3' known as an E-box element, possibly as a heterodimer with other bHLH proteins. Regulates endothelial cell proliferation, migration and tube-like structures formation. Modulates endothelial cell differentiation through NOS3. May be implicated in specification and differentiation of neuronal cell lineages in the brain. May participate in kidney development and may be involved in podocyte differentiation. During early embryonic development is involved in tissue-specific differentiation processes that are dependent on class II bHLH factors and namely modulates the differentiation program initiated by the pro-endocrine factor NEUROG3. During myogenesis, may play a role during the transition of myoblasts from the proliferative phase to the differentiation phase. Positively regulates HAMP transcription in two ways, firstly by acting directly on the HAMP promoter via E-boxes binding and indirectly through increased phosphorylation of SMAD protein complex. Repress NEUROG3-dependent gene activation in a gene-specific manner through at least two mechanisms; requires only either the sequestering of a general partner such as TCF3 through heterodimerization, either also requires binding of the bHLH domain to DNA via a basic motif. This Homo sapiens (Human) protein is Transcription factor ATOH8.